Here is a 292-residue protein sequence, read N- to C-terminus: NAD kinase (292 aa).

D73 serves as the catalytic Proton acceptor. Residues D73 to G74, N147 to E148, H158, R175, D177, T188 to S193, and Q247 each bind NAD(+).

It belongs to the NAD kinase family. A divalent metal cation serves as cofactor.

Its subcellular location is the cytoplasm. It carries out the reaction NAD(+) + ATP = ADP + NADP(+) + H(+). Involved in the regulation of the intracellular balance of NAD and NADP, and is a key enzyme in the biosynthesis of NADP. Catalyzes specifically the phosphorylation on 2'-hydroxyl of the adenosine moiety of NAD to yield NADP. The sequence is that of NAD kinase from Shigella boydii serotype 18 (strain CDC 3083-94 / BS512).